Consider the following 810-residue polypeptide: Calpain-3 (810 aa).

A compositionally biased stretch (low complexity) spans 9 to 27 (VAQQTAAGSVPSTTSTTTE). Residues 9–31 (VAQQTAAGSVPSTTSTTTEGTGG) form a disordered region. A Calpain catalytic domain is found at 68–410 (LYEDPDFPPN…FTKLEICNLT (343 aa)). Active-site residues include Cys-123, His-327, and Asn-351. A domain III region spans residues 411–579 (PDTLEADKLQ…KRSLSEEVEN (169 aa)). The interval 578 to 639 (ENMIEADRPS…SAKAREKSEE (62 aa)) is disordered. Residues 580 to 638 (MIEADRPSKKKKGKPIIFVSDRANSNKELTTDEDAGKDGEKTHVDEKKRSSAKAREKSE) form a linker region. The segment covering 613-639 (DAGKDGEKTHVDEKKRSSAKAREKSEE) has biased composition (basic and acidic residues). EF-hand domains are found at residues 638–672 (EEET…VVKK), 681–714 (FELE…DKIK), 711–746 (DKIK…AGFR), and 776–810 (VRLD…TMYA). Residues 639-809 (EETQFRNIFR…VLEWLQLTMY (171 aa)) form a domain IV region. 18 residues coordinate Ca(2+): Ala-651, Asp-654, Glu-656, Glu-661, Asp-694, Asp-696, Ser-698, Lys-700, Glu-705, Asp-724, Asp-726, Ser-728, Thr-730, Glu-735, Asp-789, Asp-791, Asp-793, and Ile-795.

Belongs to the peptidase C2 family. Homodimer; via EF-hand domain 4. Interacts with TTN/titin. Interacts with CMYA5; this interaction, which results in CMYA5 proteolysis, may protect CAPN3 from autolysis. Interacts with SIMC1. Interacts with UTP25; the interaction is required for CAPN3 translocation to the nucleolus. As to expression, skeletal muscle. Low levels in spleen, intestine and bone.

It is found in the cytoplasm. It localises to the nucleus. Its subcellular location is the nucleolus. The catalysed reaction is Broad endopeptidase activity.. With respect to regulation, activated by micromolar concentrations of calcium and inhibited by calpastatin. In terms of biological role, calcium-regulated non-lysosomal thiol-protease. Proteolytically cleaves CTBP1. Mediates, with UTP25, the proteasome-independent degradation of p53/TP53. In Gallus gallus (Chicken), this protein is Calpain-3 (CAPN3).